The primary structure comprises 638 residues: 1-deoxy-D-xylulose-5-phosphate synthase (638 aa).

Thiamine diphosphate-binding positions include H71 and 112 to 114 (SHA). Residue D144 participates in Mg(2+) binding. Thiamine diphosphate contacts are provided by residues 145–146 (GA), N173, Y284, and E365. N173 provides a ligand contact to Mg(2+).

This sequence belongs to the transketolase family. DXPS subfamily. In terms of assembly, homodimer. Mg(2+) serves as cofactor. Thiamine diphosphate is required as a cofactor.

The catalysed reaction is D-glyceraldehyde 3-phosphate + pyruvate + H(+) = 1-deoxy-D-xylulose 5-phosphate + CO2. It functions in the pathway metabolic intermediate biosynthesis; 1-deoxy-D-xylulose 5-phosphate biosynthesis; 1-deoxy-D-xylulose 5-phosphate from D-glyceraldehyde 3-phosphate and pyruvate: step 1/1. Catalyzes the acyloin condensation reaction between C atoms 2 and 3 of pyruvate and glyceraldehyde 3-phosphate to yield 1-deoxy-D-xylulose-5-phosphate (DXP). The chain is 1-deoxy-D-xylulose-5-phosphate synthase from Mycobacterium sp. (strain KMS).